Reading from the N-terminus, the 219-residue chain is Suppressor-of-stellate-like protein (219 aa).

The interval 194–219 is disordered; the sequence is SAESPPIKVESSVSKSPSWLRNVPNF. The span at 204–219 shows a compositional bias: polar residues; it reads SSVSKSPSWLRNVPNF.

The protein belongs to the casein kinase 2 subunit beta family.

In Drosophila melanogaster (Fruit fly), this protein is Suppressor-of-stellate-like protein (Ssl).